The sequence spans 222 residues: Putative O-methyltransferase MAV_1364 (222 aa).

Residues Val-49, Glu-71, 73 to 74 (GT), Ser-79, Asp-97, and Ile-98 each bind S-adenosyl-L-methionine. Asp-145 is a binding site for substrate. Residue Asp-147 coordinates S-adenosyl-L-methionine.

It belongs to the class I-like SAM-binding methyltransferase superfamily. Cation-dependent O-methyltransferase family.

The sequence is that of Putative O-methyltransferase MAV_1364 from Mycobacterium avium (strain 104).